The chain runs to 1075 residues: Nuclear factor of activated T-cells, cytoplasmic 3 (1075 aa).

Thr2 is subject to N-acetylthreonine. Residues 18 to 37 (FGEDGAPAPPPPGSRPADLE) form a disordered region. The segment at 109-114 (PSIQIT) is calcineurin-binding. A disordered region spans residues 205 to 306 (LGSPLTSPGG…PGHSPRGSVT (102 aa)). 2 consecutive repeat copies span residues 207 to 223 (SPLTSPGGSPGGCPGEE) and 236 to 252 (SPRQSPCHSPRSSVTDE). The segment at 207-308 (SPLTSPGGSP…HSPRGSVTED (102 aa)) is 3 X SP repeats. The span at 236–253 (SPRQSPCHSPRSSVTDEN) shows a compositional bias: polar residues. The segment covering 256–270 (SPRPASGPSSRPTSP) has biased composition (low complexity). Residues 273–275 (KRR) carry the Nuclear localization signal motif. Copy 3 of the repeat occupies 292–308 (SPVPSPGHSPRGSVTED). Phosphoserine occurs at positions 344 and 372. Residues 415 to 596 (SSLPPLDWPL…IPVECSQRSA (182 aa)) enclose the RHD domain. Residues 444–451 (RAHYETEG) mediate DNA binding. The Nuclear localization signal motif lies at 686 to 688 (KRK). Disordered stretches follow at residues 711–739 (DLSSVPSLPVPHPAQTQRPSSDSGCSHDS) and 887–988 (SNTG…GLSA). Polar residues-rich tracts occupy residues 724 to 739 (AQTQRPSSDSGCSHDS) and 887 to 912 (SNTGQRSLSSPVADQITGQPSSQLQP). Composition is skewed to low complexity over residues 916-939 (GPSHSGSATTASPAASHPLASSPL) and 949-967 (PMPYQSPSSGTASSPSPAT). Residues 970 to 981 (HSGQHSTQAQST) are compositionally biased toward polar residues. The Nuclear export signal signature appears at 1032 to 1041 (TLDDVNEIIG). The disordered stretch occupies residues 1049-1075 (VSQGAGVSRQAPLPSPESLDLGRSDGL). A phosphoserine mark is found at Ser1063 and Ser1066.

As to quaternary structure, NFATC proteins bind to DNA as monomers. Member of the multicomponent NFATC transcription complex that consists of at least two components, a pre-existing cytoplasmic component NFATC2 and an inducible nuclear component NFATC1. Other members such as NFATC4, or members of the activating protein-1 family, MAF, GATA4 and Cbp/p300 can also bind the complex. Component of a promoter-binding complex composed of STAT3, NFATC3 and NFATC4; complex formation is enhanced by calcineurin. Interacts with TRIM17; this interaction prevents NFATC3 nuclear localization. Interacts with and ubiquitinated by STUB1/CHIP; HSPA1A/HSP70 is required as a co-chaperone. Post-translationally, ubiquitinated by STUB1/CHIP, leading to proteasomal degradation. In terms of processing, phosphorylated by NFATC-kinase; dephosphorylated by calcineurin. As to expression, predominantly expressed in thymus and is also found in peripheral blood leukocytes and kidney. Predominantly expressed in skeletal muscle. Also found weakly expressed in the thymus, kidney, testis, spleen, prostate, ovary, small intestine, heart, placenta and pancreas. In terms of tissue distribution, expressed in thymus and kidney. As to expression, expressed in thymus and skeletal muscle.

The protein resides in the cytoplasm. It localises to the nucleus. In terms of biological role, acts as a regulator of transcriptional activation. Binds to the TNFSF11/RANKL promoter region and promotes TNFSF11 transcription. Binding to the TNFSF11 promoter region is increased by high levels of Ca(2+) which induce NFATC3 expression and may lead to regulation of TNFSF11 expression in osteoblasts. Plays a role in promoting mesenteric arterial wall remodeling in response to the intermittent hypoxia-induced increase in EDN1 and ROCK signaling. As a result NFATC3 colocalizes with F-actin filaments, translocates to the nucleus and promotes transcription of the smooth muscle hypertrophy and differentiation marker ACTA2. Promotes lipopolysaccharide-induced apoptosis and hypertrophy in cardiomyocytes. Following JAK/STAT signaling activation and as part of a complex with NFATC4 and STAT3, binds to the alpha-beta E4 promoter region of CRYAB and activates transcription in cardiomyocytes. In conjunction with NFATC4, involved in embryonic heart development via maintenance of cardiomyocyte survival, proliferation and differentiation. Plays a role in the inducible expression of cytokine genes in T-cells, especially in the induction of the IL-2. Required for thymocyte maturation during DN3 to DN4 transition and during positive selection. Positively regulates macrophage-derived polymicrobial clearance, via binding to the promoter region and promoting transcription of NOS2 resulting in subsequent generation of nitric oxide. Involved in Ca(2+)-mediated transcriptional responses upon Ca(2+) influx via ORAI1 CRAC channels. This is Nuclear factor of activated T-cells, cytoplasmic 3 from Homo sapiens (Human).